The sequence spans 784 residues: Lon protease (784 aa).

The region spanning 6-207 is the Lon N-terminal domain; the sequence is LPLMALRDMV…TVITTLTSNI (202 aa). 356 to 363 contacts ATP; the sequence is GPPGVGKT. Positions 592–773 constitute a Lon proteolytic domain; sequence EDQIGSTTGL…DQVLKHALVE (182 aa). Residues serine 679 and lysine 722 contribute to the active site.

It belongs to the peptidase S16 family. As to quaternary structure, homohexamer. Organized in a ring with a central cavity.

The protein resides in the cytoplasm. It catalyses the reaction Hydrolysis of proteins in presence of ATP.. In terms of biological role, ATP-dependent serine protease that mediates the selective degradation of mutant and abnormal proteins as well as certain short-lived regulatory proteins. Required for cellular homeostasis and for survival from DNA damage and developmental changes induced by stress. Degrades polypeptides processively to yield small peptide fragments that are 5 to 10 amino acids long. Binds to DNA in a double-stranded, site-specific manner. The chain is Lon protease from Rickettsia typhi (strain ATCC VR-144 / Wilmington).